The sequence spans 449 residues: Bifunctional protein GlmU (449 aa).

Positions 1-229 (MNHFAVILAA…FEETIGVNDR (229 aa)) are pyrophosphorylase. UDP-N-acetyl-alpha-D-glucosamine-binding positions include 8–11 (LAAG), Lys-22, Gln-72, and 77–78 (GT). Asp-102 contributes to the Mg(2+) binding site. UDP-N-acetyl-alpha-D-glucosamine contacts are provided by Gly-139, Glu-154, Asn-169, and Asn-227. Asn-227 is a Mg(2+) binding site. Residues 230–250 (VALAQAETSMRKRTNEHWMRQ) form a linker region. The segment at 251-449 (GVTFIDPAST…ERQTTKPDYR (199 aa)) is N-acetyltransferase. Arg-332 and Lys-350 together coordinate UDP-N-acetyl-alpha-D-glucosamine. The Proton acceptor role is filled by His-362. UDP-N-acetyl-alpha-D-glucosamine contacts are provided by Tyr-365 and Asn-376. Acetyl-CoA is bound by residues 385–386 (NY), Ala-422, and Arg-439.

This sequence in the N-terminal section; belongs to the N-acetylglucosamine-1-phosphate uridyltransferase family. The protein in the C-terminal section; belongs to the transferase hexapeptide repeat family. In terms of assembly, homotrimer. Mg(2+) is required as a cofactor.

The protein localises to the cytoplasm. It carries out the reaction alpha-D-glucosamine 1-phosphate + acetyl-CoA = N-acetyl-alpha-D-glucosamine 1-phosphate + CoA + H(+). The enzyme catalyses N-acetyl-alpha-D-glucosamine 1-phosphate + UTP + H(+) = UDP-N-acetyl-alpha-D-glucosamine + diphosphate. It functions in the pathway nucleotide-sugar biosynthesis; UDP-N-acetyl-alpha-D-glucosamine biosynthesis; N-acetyl-alpha-D-glucosamine 1-phosphate from alpha-D-glucosamine 6-phosphate (route II): step 2/2. The protein operates within nucleotide-sugar biosynthesis; UDP-N-acetyl-alpha-D-glucosamine biosynthesis; UDP-N-acetyl-alpha-D-glucosamine from N-acetyl-alpha-D-glucosamine 1-phosphate: step 1/1. Its pathway is bacterial outer membrane biogenesis; LPS lipid A biosynthesis. Its function is as follows. Catalyzes the last two sequential reactions in the de novo biosynthetic pathway for UDP-N-acetylglucosamine (UDP-GlcNAc). The C-terminal domain catalyzes the transfer of acetyl group from acetyl coenzyme A to glucosamine-1-phosphate (GlcN-1-P) to produce N-acetylglucosamine-1-phosphate (GlcNAc-1-P), which is converted into UDP-GlcNAc by the transfer of uridine 5-monophosphate (from uridine 5-triphosphate), a reaction catalyzed by the N-terminal domain. The chain is Bifunctional protein GlmU from Exiguobacterium sibiricum (strain DSM 17290 / CCUG 55495 / CIP 109462 / JCM 13490 / 255-15).